Consider the following 414-residue polypeptide: Glyceraldehyde-3-phosphate dehydrogenase, chloroplastic (414 aa).

A chloroplast-targeting transit peptide spans 1-76 (MAFVAPVATV…GIVAATFGPT (76 aa)). Residues 88 to 89 (RI), D112, and R156 each bind NADP(+). D-glyceraldehyde 3-phosphate contacts are provided by residues 230–232 (SCT), T261, R276, 289–290 (TG), and R312. Catalysis depends on C231, which acts as the Nucleophile. Residue N394 coordinates NADP(+).

This sequence belongs to the glyceraldehyde-3-phosphate dehydrogenase family. In terms of assembly, homotetramer.

It is found in the plastid. Its subcellular location is the chloroplast. It carries out the reaction D-glyceraldehyde 3-phosphate + phosphate + NADP(+) = (2R)-3-phospho-glyceroyl phosphate + NADPH + H(+). The protein operates within carbohydrate biosynthesis; Calvin cycle. This Chondrus crispus (Carrageen Irish moss) protein is Glyceraldehyde-3-phosphate dehydrogenase, chloroplastic (GAPA).